A 504-amino-acid polypeptide reads, in one-letter code: Glucan endo-1,3-beta-glucosidase 7 (504 aa).

A signal peptide spans 1–22; sequence MALSISIYFLLIFLSHFPSSHA. The active-site Proton donor is the Glu-119. Glu-264 functions as the Nucleophile in the catalytic mechanism. Cys-365 and Cys-427 are joined by a disulfide.

The protein belongs to the glycosyl hydrolase 17 family. Contains two additional disulfide bonds.

The protein localises to the secreted. It localises to the cell wall. The catalysed reaction is Hydrolysis of (1-&gt;3)-beta-D-glucosidic linkages in (1-&gt;3)-beta-D-glucans.. The polypeptide is Glucan endo-1,3-beta-glucosidase 7 (Arabidopsis thaliana (Mouse-ear cress)).